Reading from the N-terminus, the 160-residue chain is SsrA-binding protein (160 aa).

The protein belongs to the SmpB family.

It localises to the cytoplasm. Functionally, required for rescue of stalled ribosomes mediated by trans-translation. Binds to transfer-messenger RNA (tmRNA), required for stable association of tmRNA with ribosomes. tmRNA and SmpB together mimic tRNA shape, replacing the anticodon stem-loop with SmpB. tmRNA is encoded by the ssrA gene; the 2 termini fold to resemble tRNA(Ala) and it encodes a 'tag peptide', a short internal open reading frame. During trans-translation Ala-aminoacylated tmRNA acts like a tRNA, entering the A-site of stalled ribosomes, displacing the stalled mRNA. The ribosome then switches to translate the ORF on the tmRNA; the nascent peptide is terminated with the 'tag peptide' encoded by the tmRNA and targeted for degradation. The ribosome is freed to recommence translation, which seems to be the essential function of trans-translation. The sequence is that of SsrA-binding protein from Proteus mirabilis (strain HI4320).